The chain runs to 203 residues: Glycerol-3-phosphate acyltransferase (203 aa).

Helical transmembrane passes span 6–26, 82–102, 118–138, and 141–161; these read LTLL…AVLV, AISL…PIFF, APIG…LVLI, and YSSL…WWLD.

This sequence belongs to the PlsY family. As to quaternary structure, probably interacts with PlsX.

Its subcellular location is the cell inner membrane. It catalyses the reaction an acyl phosphate + sn-glycerol 3-phosphate = a 1-acyl-sn-glycero-3-phosphate + phosphate. Its pathway is lipid metabolism; phospholipid metabolism. Catalyzes the transfer of an acyl group from acyl-phosphate (acyl-PO(4)) to glycerol-3-phosphate (G3P) to form lysophosphatidic acid (LPA). This enzyme utilizes acyl-phosphate as fatty acyl donor, but not acyl-CoA or acyl-ACP. This chain is Glycerol-3-phosphate acyltransferase, found in Shewanella sp. (strain MR-7).